Consider the following 527-residue polypeptide: Sulfate adenylyltransferase (527 aa).

Positions 1–176 (MPIPTPHGGK…LQGINYPKHY (176 aa)) are N-terminal. The catalytic stretch occupies residues 177-406 (DYVDARKTPT…LRETNPPRSK (230 aa)). Residue Gln-206 coordinates sulfate. ATP contacts are provided by residues 206-209 (QTRN) and 302-305 (GRDH). Active-site residues include Thr-207, Arg-208, and Asn-209. Arg-208 serves as a coordination point for sulfate. Ala-306 contacts sulfate. ATP is bound at residue Val-344. The required for oligomerization; adenylyl-sulfate kinase-like stretch occupies residues 407–527 (QGFAILIDNS…VNYLKDQGFY (121 aa)).

It belongs to the sulfate adenylyltransferase family. As to quaternary structure, homohexamer. Dimer of trimers.

It localises to the cytoplasm. It catalyses the reaction sulfate + ATP + H(+) = adenosine 5'-phosphosulfate + diphosphate. The protein operates within sulfur metabolism; hydrogen sulfide biosynthesis; sulfite from sulfate: step 1/3. In terms of biological role, catalyzes the first intracellular reaction of sulfate assimilation, forming adenosine-5'-phosphosulfate (APS) from inorganic sulfate and ATP. Plays an important role in sulfate activation as a component of the biosynthesis pathway of sulfur-containing amino acids. The protein is Sulfate adenylyltransferase of Candida albicans (strain SC5314 / ATCC MYA-2876) (Yeast).